The following is a 554-amino-acid chain: MRSKRFEALAKRPVNQDGFVKEWIEEGFIAMESPNDPKPSIKIVNGTVTELDGKSASEFDLIDHFIARYGINLARAEEVMAMDSVKLANMLCDPNVKRKDIVPLTTAMTPAKIVEVVSHMNVVEMMMAMQKMRARRTPSQQAHVTNVKDNPVQIAADAAEGAWRGFDEQETTVAVARYAPFNAIALLVGSQVGRPGVLTQCSLEEATELKLGMLGHTCYAETISVYGTEPVFTDGDDTPWSKGFLASSYASRGLKMRFTSGSGSEVQMGYAEGKSMLYLEARCIYITKAAGVQGLQNGSVSCIGVPSAVPSGIRAVLAENLICSSLDLECASSNDQTFTHSDMRRTARLLMQFLPGTDFISSGYSAVPNYDNMFAGSNEDAEDFDDYNVLQRDLKVDGGLRPVREEDVIAIRNKAARALQAVFAGMGLPPITDEEVEAATYAHGSKDMPERNIVEDIKFAQEIINKNRNGLEVVKALAQGGFTDVAQDMLNIQKAKLTGDYLHTSAIIVGDGQVLSAVNDVNDYAGPATGYRLQGERWEEIKNIPGALDPNELG.

The protein belongs to the diol/glycerol dehydratase large subunit family. The propanediol dehydratase enzyme is a heterotrimeric complex composed of a large (PduC), a medium (PduD) and a small (PduE) subunit. Adenosylcob(III)alamin is required as a cofactor.

The protein localises to the bacterial microcompartment. It carries out the reaction propane-1,2-diol = propanal + H2O. Its pathway is polyol metabolism; 1,2-propanediol degradation. Functionally, part of the PduCDE complex that catalyzes the dehydration of 1,2-propanediol (1,2-PD) to propionaldehyde. This subunit is directly targeted to the bacterial microcompartment (BMC). Its function is as follows. Expression of a cosmid containing the full 21-gene pdu operon in E.coli allows E.coli to grow on 1,2-propanediol (1,2-PD) with the appearance of BMCs in its cytoplasm. The 1,2-PD-specific bacterial microcompartment (BMC) concentrates low levels of 1,2-PD catabolic enzymes, concentrates volatile reaction intermediates thus enhancing pathway flux and keeps the level of toxic, mutagenic propionaldehyde low. In Citrobacter freundii, this protein is Propanediol dehydratase large subunit.